We begin with the raw amino-acid sequence, 92 residues long: Small ribosomal subunit protein uS19 (92 aa).

Belongs to the universal ribosomal protein uS19 family.

Protein S19 forms a complex with S13 that binds strongly to the 16S ribosomal RNA. This is Small ribosomal subunit protein uS19 from Neisseria meningitidis serogroup C (strain 053442).